The following is a 450-amino-acid chain: Glucose-6-phosphate isomerase (450 aa).

At Thr38 the chain carries Phosphothreonine. Glu290 serves as the catalytic Proton donor. Active-site residues include His311 and Lys425.

It belongs to the GPI family.

The protein localises to the cytoplasm. The catalysed reaction is alpha-D-glucose 6-phosphate = beta-D-fructose 6-phosphate. It participates in carbohydrate biosynthesis; gluconeogenesis. The protein operates within carbohydrate degradation; glycolysis; D-glyceraldehyde 3-phosphate and glycerone phosphate from D-glucose: step 2/4. In terms of biological role, catalyzes the reversible isomerization of glucose-6-phosphate to fructose-6-phosphate. The chain is Glucose-6-phosphate isomerase from Bacillus subtilis (strain 168).